A 366-amino-acid chain; its full sequence is 5-hydroxytryptamine receptor 1F (366 aa).

At 1-24 the chain is on the extracellular side; the sequence is MDFLNASDQNLTSEELLNRMPSKI. N5 and N10 each carry an N-linked (GlcNAc...) asparagine glycan. A helical transmembrane segment spans residues 25–49; sequence LVSLTLSGLALMTTTINSLVIAAII. The Cytoplasmic portion of the chain corresponds to 50 to 59; that stretch reads VTRKLHHPAN. Residues 60–81 traverse the membrane as a helical segment; that stretch reads YLICSLAVTDFLVAVLVMPFSI. The Extracellular segment spans residues 82 to 96; the sequence is VYIVRESWIMGQVLC. Cysteines 96 and 172 form a disulfide. The helical transmembrane segment at 97–119 threads the bilayer; that stretch reads DIWLSVDIICCTCSILHLSAIAL. D103 and C107 together coordinate serotonin. A DRY motif; important for ligand-induced conformation changes motif is present at residues 120-122; it reads DRY. Over 120–139 the chain is Cytoplasmic; the sequence is DRYRAITDAVEYARKRTPRH. The helical transmembrane segment at 140–159 threads the bilayer; sequence AGIMITIVWVISVFISMPPL. The Extracellular portion of the chain corresponds to 160–178; sequence FWRHQGTSRDDECVIKHDH. A helical transmembrane segment spans residues 179-202; that stretch reads IVSTIYSTFGAFYIPLVLILILYY. Topologically, residues 203-291 are cytoplasmic; that stretch reads KIYRAARTLY…KISGTRERKA (89 aa). The helical transmembrane segment at 292–315 threads the bilayer; sequence ATTLGLILGAFVICWLPFFVKELV. Residues 316-327 are Extracellular-facing; it reads VNVCEKCKISEE. A helical membrane pass occupies residues 328–350; the sequence is MSNFLAWLGYLNSLINPLIYTIF. The NPxxY motif; important for ligand-induced conformation changes and signaling motif lies at 343 to 347; the sequence is NPLIY. The Cytoplasmic segment spans residues 351–366; sequence NEDFKKAFQKLVRCRY.

This sequence belongs to the G-protein coupled receptor 1 family. As to expression, detected in hippocampus.

The protein resides in the cell membrane. G-protein coupled receptor for 5-hydroxytryptamine (serotonin). Also functions as a receptor for various alkaloids and psychoactive substances. Ligand binding causes a conformation change that triggers signaling via guanine nucleotide-binding proteins (G proteins) and modulates the activity of downstream effectors, such as adenylate cyclase. HTR1F is coupled to G(i)/G(o) G alpha proteins and mediates inhibitory neurotransmission by inhibiting adenylate cyclase activity. The polypeptide is 5-hydroxytryptamine receptor 1F (Htr1f) (Mus musculus (Mouse)).